A 323-amino-acid chain; its full sequence is Phosphatidylglycerol--prolipoprotein diacylglyceryl transferase (323 aa).

Transmembrane regions (helical) follow at residues 15–35 (VIQG…ILIS), 58–78 (FMFS…TLVY), and 106–126 (GMAI…TINT). An a 1,2-diacyl-sn-glycero-3-phospho-(1'-sn-glycerol)-binding site is contributed by R156. Transmembrane regions (helical) follow at residues 242-262 (GFIF…IEYL) and 289-309 (ISMG…WIIV).

It belongs to the Lgt family.

Its subcellular location is the cell inner membrane. It catalyses the reaction L-cysteinyl-[prolipoprotein] + a 1,2-diacyl-sn-glycero-3-phospho-(1'-sn-glycerol) = an S-1,2-diacyl-sn-glyceryl-L-cysteinyl-[prolipoprotein] + sn-glycerol 1-phosphate + H(+). It functions in the pathway protein modification; lipoprotein biosynthesis (diacylglyceryl transfer). Functionally, catalyzes the transfer of the diacylglyceryl group from phosphatidylglycerol to the sulfhydryl group of the N-terminal cysteine of a prolipoprotein, the first step in the formation of mature lipoproteins. In Borreliella afzelii (strain PKo) (Borrelia afzelii), this protein is Phosphatidylglycerol--prolipoprotein diacylglyceryl transferase.